The following is a 275-amino-acid chain: MDLWLREGQIEDAAMTYKIKETLVTKKTKYQELAIVDTYALGRMLVLDGIVQTTVKDEYVYHEMITHIPLFTHPNPQKVLIVGGGDGGTVREVLKHETVEKVVLCEIDEQVVYECKKYLPEISCELDNPKCEVFIGDGIKYVHQHRNEFDVIIVDSTDPFGAAEGLFGGSFYKEIYNCLTEDGIFIAQTETPFYLPEVVKQVYKDAKEIFPITRLFMAGIPTYPSGFWSFTIGSKKYDPKEVDLSSTLNINTKYYTKELHKACFVLPKFVEDLTR.

The region spanning 2–235 (DLWLREGQIE…GFWSFTIGSK (234 aa)) is the PABS domain. S-methyl-5'-thioadenosine is bound at residue Gln31. Spermidine-binding residues include His62 and Asp86. S-methyl-5'-thioadenosine contacts are provided by residues Glu106 and 137-138 (DG). Residue Asp155 is the Proton acceptor of the active site. 155–158 (DSTD) is a spermidine binding site.

The protein belongs to the spermidine/spermine synthase family. Homodimer or homotetramer.

It localises to the cytoplasm. It carries out the reaction S-adenosyl 3-(methylsulfanyl)propylamine + putrescine = S-methyl-5'-thioadenosine + spermidine + H(+). The protein operates within amine and polyamine biosynthesis; spermidine biosynthesis; spermidine from putrescine: step 1/1. Functionally, catalyzes the irreversible transfer of a propylamine group from the amino donor S-adenosylmethioninamine (decarboxy-AdoMet) to putrescine (1,4-diaminobutane) to yield spermidine. In Clostridium kluyveri (strain NBRC 12016), this protein is Polyamine aminopropyltransferase.